Here is a 374-residue protein sequence, read N- to C-terminus: MARSLTWGCCPWCLTEEEKTAARIDQEINRILLEQKKQEREELKLLLLGPGESGKSTFIKQMRIIHGVGYSEEDRRAFRLLIYQNIFVSMQAMIDAMDRLQIPFSRPDSKQHASLVMTQDPYKVSTFEKPYAVAMQYLWRDAGIRACYERRREFHLLDSAVYYLSHLERISEDSYIPTAQDVLRSRMPTTGINEYCFSVKKTKLRIVDVGGQRSERRKWIHCFENVIALIYLASLSEYDQCLEENDQENRMEESLALFSTILELPWFKSTSVILFLNKTDILEDKIHTSHLATYFPSFQGPRRDAEAAKSFILDMYARVYASCAEPQDGGRKGSRARRFFAHFTCATDTQSVRSVFKDVRDSVLARYLDEINLL.

A G-alpha domain is found at 41-374; the sequence is EELKLLLLGP…ARYLDEINLL (334 aa). The segment at 44–57 is G1 motif; that stretch reads KLLLLGPGESGKST. GTP-binding positions include 49–56, 183–189, 208–212, 277–280, and Ala-346; these read GPGESGKS, LRSRMPT, DVGGQ, and NKTD. Mg(2+)-binding residues include Ser-56 and Thr-189. The tract at residues 181–189 is G2 motif; that stretch reads DVLRSRMPT. Positions 204-213 are G3 motif; it reads LRIVDVGGQR. The G4 motif stretch occupies residues 273–280; it reads ILFLNKTD. The segment at 344-349 is G5 motif; the sequence is TCATDT.

Belongs to the G-alpha family. G(q) subfamily. G proteins are composed of 3 units; alpha, beta and gamma. The alpha chain contains the guanine nucleotide binding site. Expressed primarily in hematopoietic cells. Coexpressed with EDG6 at the same relative levels in all tissues examined, with the highest levels in adult spleen and lung.

Functionally, guanine nucleotide-binding proteins (G proteins) are involved as modulators or transducers in various transmembrane signaling systems. The sequence is that of Guanine nucleotide-binding protein subunit alpha-15 (Gna15) from Mus musculus (Mouse).